We begin with the raw amino-acid sequence, 139 residues long: uncharacterized protein (139 aa).

This is an uncharacterized protein from Halalkalibacterium halodurans (strain ATCC BAA-125 / DSM 18197 / FERM 7344 / JCM 9153 / C-125) (Bacillus halodurans).